Consider the following 189-residue polypeptide: MQVILLQRVAKLGQMGEVVNVKDGYARNYLLPQGKALRANESNIKSFEARKAQLEAQNLETKKEAAAVAEKLDGQSFVVIRSASDAGALYGSVTTRDAADAATEAGFTVDRGQVVLDRPIKELGLHTVTVTLHPEVAVKITLNVARSPEEAELQASGKSIQELAAEAEAAADFEIAELFDEIGAASQDE.

It belongs to the bacterial ribosomal protein bL9 family.

Its function is as follows. Binds to the 23S rRNA. The polypeptide is Large ribosomal subunit protein bL9 (Cereibacter sphaeroides (strain ATCC 17025 / ATH 2.4.3) (Rhodobacter sphaeroides)).